A 223-amino-acid chain; its full sequence is DnaJ homolog subfamily B member 9 (223 aa).

The signal sequence occupies residues 1-23 (MATPQSIFIFAICILMITELILA). The J domain maps to 26–90 (SYYDILGVPK…NRRKEYDTLG (65 aa)). A divergent targeting domain region spans residues 91 to 223 (HSAFTSGKGQ…VTTYTDCSGQ (133 aa)). Residue Ser133 is modified to Phosphoserine.

Interacts with HSPA5/BiP; interaction is direct. Interacts with ERN1/IRE1 (via the luminal region). Interacts with DERL1. Widely expressed. Expressed at highest level in the liver, placenta and kidney.

It localises to the endoplasmic reticulum lumen. Functionally, co-chaperone for Hsp70 protein HSPA5/BiP that acts as a key repressor of the ERN1/IRE1-mediated unfolded protein response (UPR). J domain-containing co-chaperones stimulate the ATPase activity of Hsp70 proteins and are required for efficient substrate recognition by Hsp70 proteins. In the unstressed endoplasmic reticulum, interacts with the luminal region of ERN1/IRE1 and selectively recruits HSPA5/BiP: HSPA5/BiP disrupts the dimerization of the active ERN1/IRE1 luminal region, thereby inactivating ERN1/IRE1. Also involved in endoplasmic reticulum-associated degradation (ERAD) of misfolded proteins. Required for survival of B-cell progenitors and normal antibody production. The polypeptide is DnaJ homolog subfamily B member 9 (DNAJB9) (Homo sapiens (Human)).